The sequence spans 366 residues: MSGNTLGTLFTVTTFGESHGPAIGCVIDGCPPGMGLTEADIQIELDRRKPGTSRHVTQRQEADEVEILSGVFEGVTTGTPIALLIRNTDQRSKDYGNIVETFRPGHADYTYWQKYGIRDYRGGGRSSARLTAPIVGAGAVAKKWLRERFGVEVRGYMSGLGEIDVPFVDWSYVHENPFFSPNAAVVPELEAYMDALRNDGDSIGARIDVVASGVPVGWGEPVFDRLDADIAKAMMSINAVKGVEIGAGFDSVAQRGSVHGDELTPAGFVGNHAGGVLGGISTGQDITVSIAIKPTSSIRTPRRSITKSGDEATVETFGRHDPCVGIRATPIAESMLALVLIDHALRHRAQCGDVETSTPKIAGSAT.

NADP(+) contacts are provided by R48 and R54. FMN is bound by residues 125–127 (RSS), 238–239 (NA), G278, 293–297 (KPTSS), and R319.

It belongs to the chorismate synthase family. As to quaternary structure, homotetramer. Requires FMNH2 as cofactor.

It catalyses the reaction 5-O-(1-carboxyvinyl)-3-phosphoshikimate = chorismate + phosphate. Its pathway is metabolic intermediate biosynthesis; chorismate biosynthesis; chorismate from D-erythrose 4-phosphate and phosphoenolpyruvate: step 7/7. Catalyzes the anti-1,4-elimination of the C-3 phosphate and the C-6 proR hydrogen from 5-enolpyruvylshikimate-3-phosphate (EPSP) to yield chorismate, which is the branch point compound that serves as the starting substrate for the three terminal pathways of aromatic amino acid biosynthesis. This reaction introduces a second double bond into the aromatic ring system. The protein is Chorismate synthase of Burkholderia orbicola (strain MC0-3).